Consider the following 463-residue polypeptide: uncharacterized protein (463 aa).

This sequence belongs to the mycobacterial PPE family.

This is an uncharacterized protein from Mycobacterium tuberculosis (strain CDC 1551 / Oshkosh).